We begin with the raw amino-acid sequence, 320 residues long: Cytochrome c biogenesis protein CcsA (320 aa).

The next 8 membrane-spanning stretches (helical) occupy residues 14 to 34 (SFFLLFFVTFIYWGKFLYINI), 37 to 57 (ITILGEISMKIACFFITTFLL), 68 to 88 (LSNLYESSMFLSWSFTLIHLI), 97 to 117 (WLGIITAPSAMLTHGFATLSL), 143 to 163 (MMLSYSTLLCGSLLAITILII), 228 to 248 (VISLGFPLLTIGILSGAVWAN), 263 to 283 (WALITWLIFAIYLHTRMIKGW), and 289 to 309 (AIIASLGFFIVWICYLGVNLL).

Belongs to the CcmF/CycK/Ccl1/NrfE/CcsA family. May interact with Ccs1.

It is found in the plastid. The protein resides in the chloroplast thylakoid membrane. Its function is as follows. Required during biogenesis of c-type cytochromes (cytochrome c6 and cytochrome f) at the step of heme attachment. This is Cytochrome c biogenesis protein CcsA from Marchantia polymorpha (Common liverwort).